Here is a 328-residue protein sequence, read N- to C-terminus: Octanoyltransferase, mitochondrial (328 aa).

Residues 108 to 312 form the BPL/LPL catalytic domain; sequence MKPNPIILTF…EMTKLLGIKT (205 aa). Residues 162–169, 241–243, and 254–256 each bind substrate; these read RGGQVTFH, SVG, and GVA. Cys-272 acts as the Acyl-thioester intermediate in catalysis.

Belongs to the LipB family.

Its subcellular location is the mitochondrion. It carries out the reaction octanoyl-[ACP] + L-lysyl-[protein] = N(6)-octanoyl-L-lysyl-[protein] + holo-[ACP] + H(+). It functions in the pathway protein modification; protein lipoylation via endogenous pathway; protein N(6)-(lipoyl)lysine from octanoyl-[acyl-carrier-protein]: step 1/2. In terms of biological role, catalyzes the transfer of endogenously produced octanoic acid from octanoyl-acyl-carrier-protein onto the lipoyl domains of lipoate-dependent enzymes. Lipoyl-ACP can also act as a substrate although octanoyl-ACP is likely to be the physiological substrate. The chain is Octanoyltransferase, mitochondrial (LIP2) from Saccharomyces cerevisiae (strain ATCC 204508 / S288c) (Baker's yeast).